The chain runs to 104 residues: L-rhamnose mutarotase (104 aa).

Residue Tyr18 participates in substrate binding. His22 acts as the Proton donor in catalysis. Substrate-binding positions include Tyr41 and 76–77 (WW).

It belongs to the rhamnose mutarotase family. Homodimer.

It is found in the cytoplasm. The catalysed reaction is alpha-L-rhamnose = beta-L-rhamnose. It functions in the pathway carbohydrate metabolism; L-rhamnose metabolism. In terms of biological role, involved in the anomeric conversion of L-rhamnose. This chain is L-rhamnose mutarotase, found in Listeria monocytogenes serovar 1/2a (strain ATCC BAA-679 / EGD-e).